The chain runs to 271 residues: Acyl-[acyl-carrier-protein]--UDP-N-acetylglucosamine O-acyltransferase (271 aa).

It belongs to the transferase hexapeptide repeat family. LpxA subfamily. As to quaternary structure, homotrimer.

Its subcellular location is the cytoplasm. The enzyme catalyses a (3R)-hydroxyacyl-[ACP] + UDP-N-acetyl-alpha-D-glucosamine = a UDP-3-O-[(3R)-3-hydroxyacyl]-N-acetyl-alpha-D-glucosamine + holo-[ACP]. It functions in the pathway glycolipid biosynthesis; lipid IV(A) biosynthesis; lipid IV(A) from (3R)-3-hydroxytetradecanoyl-[acyl-carrier-protein] and UDP-N-acetyl-alpha-D-glucosamine: step 1/6. In terms of biological role, involved in the biosynthesis of lipid A, a phosphorylated glycolipid that anchors the lipopolysaccharide to the outer membrane of the cell. The polypeptide is Acyl-[acyl-carrier-protein]--UDP-N-acetylglucosamine O-acyltransferase (Rhizobium rhizogenes (strain K84 / ATCC BAA-868) (Agrobacterium radiobacter)).